The sequence spans 398 residues: MDTQAFRRSLHHSDRYNRRGFDSPTKRAQALEEAYQSDLISSIRDNGFTYTKGRLNIKLAQAFGFCWGVERAVAMAYETRRHYPNENIWITNEIIHNPSVNDHLRKMNVKFISAKNGIKDFSLVSNGDVVILPAFGATVQEMKLLHEKGCHIIDTTCPWVSKVWHTVEKHKKHVFTSIIHGKFKHEETLATSSFAGKYLVVLDLEEANYVSEYILGKGNRNEFMNKFSKAFSNGFDPDKDLDRVGVANQTTMLKSETEEIGKVFERTMLKKFGPENLNSHFLAFNTICDATEERQDAMFSLVDEDLDILVVIGGFNSSNTTHLQEIAITKNISSFHIDTPERISVKENSIFHKPLGSELELKKNFLPSGKINVGITSGASTPDKVVADVIEKLIDIAS.

Cys66 is a [4Fe-4S] cluster binding site. Residue His96 participates in (2E)-4-hydroxy-3-methylbut-2-enyl diphosphate binding. Residue His96 participates in dimethylallyl diphosphate binding. Residue His96 participates in isopentenyl diphosphate binding. Residue Cys157 participates in [4Fe-4S] cluster binding. A (2E)-4-hydroxy-3-methylbut-2-enyl diphosphate-binding site is contributed by His185. His185 provides a ligand contact to dimethylallyl diphosphate. His185 provides a ligand contact to isopentenyl diphosphate. Glu187 acts as the Proton donor in catalysis. Thr250 contributes to the (2E)-4-hydroxy-3-methylbut-2-enyl diphosphate binding site. [4Fe-4S] cluster is bound at residue Cys288. Residues Ser317, Ser318, Asn319, and Ser380 each coordinate (2E)-4-hydroxy-3-methylbut-2-enyl diphosphate. Dimethylallyl diphosphate-binding residues include Ser317, Ser318, Asn319, and Ser380. Residues Ser317, Ser318, Asn319, and Ser380 each coordinate isopentenyl diphosphate.

It belongs to the IspH family. Requires [4Fe-4S] cluster as cofactor.

It carries out the reaction isopentenyl diphosphate + 2 oxidized [2Fe-2S]-[ferredoxin] + H2O = (2E)-4-hydroxy-3-methylbut-2-enyl diphosphate + 2 reduced [2Fe-2S]-[ferredoxin] + 2 H(+). The catalysed reaction is dimethylallyl diphosphate + 2 oxidized [2Fe-2S]-[ferredoxin] + H2O = (2E)-4-hydroxy-3-methylbut-2-enyl diphosphate + 2 reduced [2Fe-2S]-[ferredoxin] + 2 H(+). The protein operates within isoprenoid biosynthesis; dimethylallyl diphosphate biosynthesis; dimethylallyl diphosphate from (2E)-4-hydroxy-3-methylbutenyl diphosphate: step 1/1. It participates in isoprenoid biosynthesis; isopentenyl diphosphate biosynthesis via DXP pathway; isopentenyl diphosphate from 1-deoxy-D-xylulose 5-phosphate: step 6/6. Functionally, catalyzes the conversion of 1-hydroxy-2-methyl-2-(E)-butenyl 4-diphosphate (HMBPP) into a mixture of isopentenyl diphosphate (IPP) and dimethylallyl diphosphate (DMAPP). Acts in the terminal step of the DOXP/MEP pathway for isoprenoid precursor biosynthesis. In Prochlorococcus marinus (strain AS9601), this protein is 4-hydroxy-3-methylbut-2-enyl diphosphate reductase.